We begin with the raw amino-acid sequence, 160 residues long: Large ribosomal subunit protein uL10 (160 aa).

The protein belongs to the universal ribosomal protein uL10 family. Part of the ribosomal stalk of the 50S ribosomal subunit. The N-terminus interacts with L11 and the large rRNA to form the base of the stalk. The C-terminus forms an elongated spine to which L12 dimers bind in a sequential fashion forming a multimeric L10(L12)X complex.

In terms of biological role, forms part of the ribosomal stalk, playing a central role in the interaction of the ribosome with GTP-bound translation factors. The sequence is that of Large ribosomal subunit protein uL10 from Wolinella succinogenes (strain ATCC 29543 / DSM 1740 / CCUG 13145 / JCM 31913 / LMG 7466 / NCTC 11488 / FDC 602W) (Vibrio succinogenes).